Reading from the N-terminus, the 128-residue chain is 3-aminoacrylate deaminase RutC (128 aa).

It belongs to the RutC family.

The catalysed reaction is (Z)-3-aminoacrylate + H2O + H(+) = 3-oxopropanoate + NH4(+). Its function is as follows. Involved in pyrimidine catabolism. Catalyzes the deamination of 3-aminoacrylate to malonic semialdehyde, a reaction that can also occur spontaneously. RutC may facilitate the reaction and modulate the metabolic fitness, rather than catalyzing essential functions. This chain is 3-aminoacrylate deaminase RutC, found in Serratia proteamaculans (strain 568).